Reading from the N-terminus, the 393-residue chain is NAD(P)H-quinone oxidoreductase subunit H, chloroplastic (393 aa).

This sequence belongs to the complex I 49 kDa subunit family. As to quaternary structure, NDH is composed of at least 16 different subunits, 5 of which are encoded in the nucleus.

It is found in the plastid. The protein localises to the chloroplast thylakoid membrane. It carries out the reaction a plastoquinone + NADH + (n+1) H(+)(in) = a plastoquinol + NAD(+) + n H(+)(out). The catalysed reaction is a plastoquinone + NADPH + (n+1) H(+)(in) = a plastoquinol + NADP(+) + n H(+)(out). In terms of biological role, NDH shuttles electrons from NAD(P)H:plastoquinone, via FMN and iron-sulfur (Fe-S) centers, to quinones in the photosynthetic chain and possibly in a chloroplast respiratory chain. The immediate electron acceptor for the enzyme in this species is believed to be plastoquinone. Couples the redox reaction to proton translocation, and thus conserves the redox energy in a proton gradient. The protein is NAD(P)H-quinone oxidoreductase subunit H, chloroplastic of Gossypium barbadense (Sea Island cotton).